Here is a 435-residue protein sequence, read N- to C-terminus: Cyclin-dependent kinase 14 (435 aa).

Polar residues predominate over residues 75 to 92 (RTQSSFDPFEKTSNQPTS). A disordered region spans residues 75 to 97 (RTQSSFDPFEKTSNQPTSPKFGK). Residues 101-385 (YEKLEKLGEG…AQAALNHDYF (285 aa)) enclose the Protein kinase domain. Residues 107–115 (LGEGSYATV) and K130 contribute to the ATP site. Catalysis depends on D222, which acts as the Proton acceptor.

Belongs to the protein kinase superfamily. CMGC Ser/Thr protein kinase family. CDC2/CDKX subfamily. In terms of assembly, interacts with ccny; ccny mediates its recruitment to the plasma membrane and promotes phosphorylation of lrp6.

It is found in the cell membrane. The catalysed reaction is L-seryl-[protein] + ATP = O-phospho-L-seryl-[protein] + ADP + H(+). The enzyme catalyses L-threonyl-[protein] + ATP = O-phospho-L-threonyl-[protein] + ADP + H(+). In terms of biological role, serine/threonine-protein kinase involved in the control of the eukaryotic cell cycle, whose activity is controlled by an associated cyclin. Acts as a cell-cycle regulator of Wnt signaling pathway during G2/M phase by mediating the phosphorylation of lrp6, leading to the activation of the Wnt signaling pathway. The chain is Cyclin-dependent kinase 14 (cdk14) from Xenopus laevis (African clawed frog).